Reading from the N-terminus, the 161-residue chain is Putative pre-16S rRNA nuclease (161 aa).

This sequence belongs to the YqgF nuclease family.

It is found in the cytoplasm. Could be a nuclease involved in processing of the 5'-end of pre-16S rRNA. The chain is Putative pre-16S rRNA nuclease from Bradyrhizobium diazoefficiens (strain JCM 10833 / BCRC 13528 / IAM 13628 / NBRC 14792 / USDA 110).